The following is a 149-amino-acid chain: MKVIAILTLLLFCSPTHSSFWQFQRRVKHITGRSAFFSYYGYGCYCGLGDKGIPVDDTDRHSPSSPSPYEKLKEFSCQPVLNSYQFHIVNGAVVCGCTLGPGASCHCRLKACECDKQSVHCFKESLPTYEKNFKQFSSQPRCGRHKPWC.

Positions 1–18 (MKVIAILTLLLFCSPTHS) are cleaved as a signal peptide. 4 disulfide bridges follow: C44–C142, C77–C107, C95–C112, and C97–C105. 3 residues coordinate Ca(2+): Y45, G47, and G49.

Belongs to the phospholipase A2 family. Ca(2+) serves as cofactor.

The protein resides in the secreted. Its function is as follows. Inactive phospholipase. This is Putative inactive group IIC secretory phospholipase A2 (PLA2G2C) from Homo sapiens (Human).